The sequence spans 469 residues: Mitochondrial-processing peptidase subunit beta (469 aa).

Residue histidine 78 coordinates Zn(2+). The active-site Proton acceptor is glutamate 81. 2 residues coordinate Zn(2+): histidine 82 and glutamate 159.

The protein belongs to the peptidase M16 family. In terms of assembly, heterodimer of alpha and beta subunits, forming the mitochondrial processing protease (MPP) in which subunit alpha is involved in substrate recognition and binding and subunit beta is the catalytic subunit. mppB is probably also part of the cytochrome bc1 complex as a core I protein in the mitochondrial inner membrane. The cofactor is Zn(2+).

It localises to the mitochondrion inner membrane. It is found in the mitochondrion matrix. It catalyses the reaction Release of N-terminal transit peptides from precursor proteins imported into the mitochondrion, typically with Arg in position P2.. Binding to alpha subunit is required for catalytic activity. Catalytic subunit of the essential mitochondrial processing protease (MPP), which cleaves the mitochondrial sequence off newly imported precursors proteins. Preferentially, cleaves after an arginine at position P2. Plays an essential role in mitochondrial biogenesis. This Dictyostelium discoideum (Social amoeba) protein is Mitochondrial-processing peptidase subunit beta (mppB).